Consider the following 419-residue polypeptide: Zinc finger protein Pegasus (419 aa).

3 consecutive C2H2-type zinc fingers follow at residues 79–101, 107–129, and 135–158; these read LKCR…IRIH, HRCH…MRSH, and YKCE…RRRH. Disordered stretches follow at residues 203 to 255 and 310 to 360; these read LQKP…DQDM and SVNT…TPVQ. The segment covering 208–228 has biased composition (basic and acidic residues); the sequence is SEQHHLGDFTHDLPPHAHLHQ. Polar residues-rich tracts occupy residues 310–320 and 341–360; these read SVNTAQASSPI and ERTS…TPVQ. 2 consecutive C2H2-type zinc fingers follow at residues 366 to 388 and 394 to 418; these read HHCP…MGCH and FQCN…RGQH.

Belongs to the Ikaros C2H2-type zinc-finger protein family. In terms of assembly, probably self-associates.

Its subcellular location is the nucleus. Functionally, transcriptional repressor that binds the core 5'GNNTGTNG-3' DNA consensus sequence. The polypeptide is Zinc finger protein Pegasus (ikzf5) (Danio rerio (Zebrafish)).